Here is a 231-residue protein sequence, read N- to C-terminus: Pathogenesis-related thaumatin-like protein 3.7 (231 aa).

The first 27 residues, Met1–Ala27, serve as a signal peptide directing secretion. 8 disulfide bridges follow: Cys36-Cys230, Cys77-Cys87, Cys92-Cys98, Cys143-Cys218, Cys148-Cys201, Cys156-Cys166, Cys170-Cys179, and Cys180-Cys188.

Belongs to the thaumatin family.

In terms of biological role, may be involved in disease resistance. The sequence is that of Pathogenesis-related thaumatin-like protein 3.7 from Cryptomeria japonica (Japanese cedar).